The following is a 244-amino-acid chain: Uridylate kinase (244 aa).

17–20 (KVSG) contacts ATP. Residues 25-30 (GDKGFG) form an involved in allosteric activation by GTP region. G59 lines the UMP pocket. Residues G60 and R64 each coordinate ATP. UMP-binding positions include D80 and 141-148 (VGNPFFTT). The ATP site is built by T168, Q169, Y174, and D177.

The protein belongs to the UMP kinase family. Homohexamer.

The protein localises to the cytoplasm. It catalyses the reaction UMP + ATP = UDP + ADP. Its pathway is pyrimidine metabolism; CTP biosynthesis via de novo pathway; UDP from UMP (UMPK route): step 1/1. With respect to regulation, allosterically activated by GTP. Inhibited by UTP. Functionally, catalyzes the reversible phosphorylation of UMP to UDP. This chain is Uridylate kinase, found in Ehrlichia ruminantium (strain Welgevonden).